The following is a 250-amino-acid chain: 2,3-bisphosphoglycerate-dependent phosphoglycerate mutase (250 aa).

Substrate contacts are provided by residues 10–17, 23–24, Arg62, 89–92, Lys100, 116–117, and 185–186; these read RHGESVWN, TG, ERHY, RR, and GN. His11 (tele-phosphohistidine intermediate) is an active-site residue. Glu89 serves as the catalytic Proton donor/acceptor.

The protein belongs to the phosphoglycerate mutase family. BPG-dependent PGAM subfamily. As to quaternary structure, homodimer.

The catalysed reaction is (2R)-2-phosphoglycerate = (2R)-3-phosphoglycerate. The protein operates within carbohydrate degradation; glycolysis; pyruvate from D-glyceraldehyde 3-phosphate: step 3/5. Functionally, catalyzes the interconversion of 2-phosphoglycerate and 3-phosphoglycerate. The sequence is that of 2,3-bisphosphoglycerate-dependent phosphoglycerate mutase from Proteus mirabilis (strain HI4320).